Consider the following 282-residue polypeptide: Elongation factor Ts (282 aa).

The segment at 79–82 (TDFV) is involved in Mg(2+) ion dislocation from EF-Tu.

This sequence belongs to the EF-Ts family.

It is found in the cytoplasm. Its function is as follows. Associates with the EF-Tu.GDP complex and induces the exchange of GDP to GTP. It remains bound to the aminoacyl-tRNA.EF-Tu.GTP complex up to the GTP hydrolysis stage on the ribosome. This is Elongation factor Ts from Shewanella piezotolerans (strain WP3 / JCM 13877).